A 321-amino-acid chain; its full sequence is Probable arabinan endo-1,5-alpha-L-arabinosidase A (321 aa).

Residues 1 to 19 form the signal peptide; sequence MSASAFVAVASCLAALVHG. Catalysis depends on D34, which acts as the Proton acceptor. E200 serves as the catalytic Proton donor.

It belongs to the glycosyl hydrolase 43 family.

Its subcellular location is the secreted. It catalyses the reaction Endohydrolysis of (1-&gt;5)-alpha-arabinofuranosidic linkages in (1-&gt;5)-arabinans.. Its pathway is glycan metabolism; L-arabinan degradation. Its function is as follows. Endo-1,5-alpha-L-arabinanase involved in degradation of pectin. Its preferred substrate is linear 1,5-alpha-L-arabinan. This Neosartorya fischeri (strain ATCC 1020 / DSM 3700 / CBS 544.65 / FGSC A1164 / JCM 1740 / NRRL 181 / WB 181) (Aspergillus fischerianus) protein is Probable arabinan endo-1,5-alpha-L-arabinosidase A (abnA).